The following is a 1382-amino-acid chain: Hepatocyte growth factor receptor (1382 aa).

A signal peptide spans 1 to 24 (MKASAVLAPGILVILFTLVQKSNC). Over 25–933 (ECKEALVKSK…VIVQPDQNIT (909 aa)) the chain is Extracellular. In terms of domain architecture, Sema spans 27–516 (KEALVKSKMN…TGKKITKIPL (490 aa)). Asparagine 45 carries an N-linked (GlcNAc...) asparagine glycan. Intrachain disulfides connect cysteine 95–cysteine 101, cysteine 98–cysteine 160, cysteine 133–cysteine 141, and cysteine 173–cysteine 176. N-linked (GlcNAc...) asparagine glycosylation occurs at asparagine 106. Residues asparagine 203 and asparagine 359 are each glycosylated (N-linked (GlcNAc...) asparagine). 2 disulfide bridges follow: cysteine 299/cysteine 364 and cysteine 386/cysteine 398. Asparagine 400 and asparagine 406 each carry an N-linked (GlcNAc...) asparagine glycan. Intrachain disulfides connect cysteine 521-cysteine 539, cysteine 527-cysteine 562, cysteine 530-cysteine 546, and cysteine 542-cysteine 552. 3 IPT/TIG domains span residues 564-656 (PTIY…FSYV), 658-740 (PIIT…FSYQ), and 743-837 (PIIY…LIYV). O-linked (Man) threonine glycosylation is present at threonine 583. N-linked (GlcNAc...) asparagine glycosylation is found at asparagine 608 and asparagine 636. Threonine 677 and threonine 762 each carry an O-linked (Man) threonine glycan. N-linked (GlcNAc...) asparagine glycosylation is found at asparagine 786, asparagine 880, and asparagine 931. The chain crosses the membrane as a helical span at residues 934–956 (EFIVGILSISGILLTLLGLLLWW). Over 957 to 1382 (KKKKQIKDLG…QDNFDSEGNT (426 aa)) the chain is Cytoplasmic. Position 967 is a phosphoserine (serine 967). The residue at position 978 (threonine 978) is a Phosphothreonine. Phosphoserine occurs at positions 991, 998, and 1001. Tyrosine 1004 is subject to Phosphotyrosine. One can recognise a Protein kinase domain in the interval 1079 to 1346 (VHFNEVIGRG…RISAIFSTFI (268 aa)). Residues 1085-1093 (IGRGHFGCV) and lysine 1111 contribute to the ATP site. Aspartate 1205 functions as the Proton acceptor in the catalytic mechanism. Residues 1213–1382 (LDENFTVKVA…QDNFDSEGNT (170 aa)) are interaction with RANBP9. Tyrosine 1231 carries the post-translational modification Phosphotyrosine. Phosphotyrosine; by autocatalysis is present on residues tyrosine 1235 and tyrosine 1236. Threonine 1290 bears the Phosphothreonine mark. The interval 1321–1360 (WHPKAELRPSFSELVSRISAIFSTFIGEHYVHVNATYVNI) is interaction with MUC20. Tyrosine 1350 and tyrosine 1357 each carry phosphotyrosine; by autocatalysis. Phosphotyrosine is present on tyrosine 1366.

This sequence belongs to the protein kinase superfamily. Tyr protein kinase family. As to quaternary structure, heterodimer made of an alpha chain (50 kDa) and a beta chain (145 kDa) which are disulfide linked. Binds PLXNB1. Interacts when phosphorylated with downstream effectors including STAT3, PIK3R1, SRC, PCLG1, GRB2 and GAB1. Interacts with SPSB1, SPSB2 and SPSB4. Interacts with INPP5D/SHIP1. When phosphorylated at Tyr-1357, interacts with INPPL1/SHIP2. Interacts with RANBP9 and RANBP10, as well as SPSB1, SPSB2, SPSB3 and SPSB4. SPSB1 binding occurs in the presence and in the absence of HGF, however HGF treatment has a positive effect on this interaction. Interacts with MUC20; prevents interaction with GRB2 and suppresses hepatocyte growth factor-induced cell proliferation. Interacts with GRB10. Interacts with PTPN1 and PTPN2. Interacts with tensin TNS3. Interacts (when phosphorylated) with tensin TNS4 (via SH2 domain); the interaction increases MET protein stability by inhibiting MET endocytosis and subsequent lysosomal degradation. Autophosphorylated in response to ligand binding on Tyr-1235 and Tyr-1236 in the kinase domain leading to further phosphorylation of Tyr-1350 and Tyr-1357 in the C-terminal multifunctional docking site. Dephosphorylated by PTPRJ at Tyr-1350 and Tyr-1366. Dephosphorylated by PTPN1 and PTPN2. Post-translationally, ubiquitinated. Ubiquitination by CBL regulates the receptor stability and activity through proteasomal degradation. In terms of processing, O-mannosylation of IPT/TIG domains by TMEM260 is required for protein maturation. O-mannosylated residues are composed of single mannose glycans that are not elongated or modified.

Its subcellular location is the membrane. It carries out the reaction L-tyrosyl-[protein] + ATP = O-phospho-L-tyrosyl-[protein] + ADP + H(+). With respect to regulation, in its inactive state, the C-terminal tail interacts with the catalytic domain and inhibits the kinase activity. Upon ligand binding, the C-terminal tail is displaced and becomes phosphorylated, thus increasing the kinase activity. In terms of biological role, receptor tyrosine kinase that transduces signals from the extracellular matrix into the cytoplasm by binding to hepatocyte growth factor/HGF ligand. Regulates many physiological processes including proliferation, scattering, morphogenesis and survival. Ligand binding at the cell surface induces autophosphorylation of MET on its intracellular domain that provides docking sites for downstream signaling molecules. Following activation by ligand, interacts with the PI3-kinase subunit PIK3R1, PLCG1, SRC, GRB2, STAT3 or the adapter GAB1. Recruitment of these downstream effectors by MET leads to the activation of several signaling cascades including the RAS-ERK, PI3 kinase-AKT, or PLCgamma-PKC. The RAS-ERK activation is associated with the morphogenetic effects while PI3K/AKT coordinates prosurvival effects. During embryonic development, MET signaling plays a role in gastrulation, development and migration of muscles and neuronal precursors, angiogenesis and kidney formation. In adults, participates in wound healing as well as organ regeneration and tissue remodeling. Also promotes differentiation and proliferation of hematopoietic cells. The chain is Hepatocyte growth factor receptor (MET) from Atelerix albiventris (Middle-African hedgehog).